The following is a 118-amino-acid chain: Large ribosomal subunit protein bL20 (118 aa).

This sequence belongs to the bacterial ribosomal protein bL20 family.

In terms of biological role, binds directly to 23S ribosomal RNA and is necessary for the in vitro assembly process of the 50S ribosomal subunit. It is not involved in the protein synthesizing functions of that subunit. The polypeptide is Large ribosomal subunit protein bL20 (Lactobacillus delbrueckii subsp. bulgaricus (strain ATCC BAA-365 / Lb-18)).